Reading from the N-terminus, the 209-residue chain is MARYTGPLCKLCRREGMKLYLKGERCYTDKCAFDRRPYAPGQHGQRRAKLTQYGIQLRAKQTVKRIYGILERQFERYVEKAMQKAGDTRENLIQILEARLDNVVYRMGFAINRRQARQLVNHGHFLVNGKKVNIPSYLLKPNDVVELREKSRDLEVIKKAVEANKERSVVPWIEVDYDNYRGTFLRYPSLEEVTDLPVDLQTVIEFYSR.

The 64-residue stretch at 98 to 161 folds into the S4 RNA-binding domain; the sequence is ARLDNVVYRM…RDLEVIKKAV (64 aa).

This sequence belongs to the universal ribosomal protein uS4 family. Part of the 30S ribosomal subunit. Contacts protein S5. The interaction surface between S4 and S5 is involved in control of translational fidelity.

Its function is as follows. One of the primary rRNA binding proteins, it binds directly to 16S rRNA where it nucleates assembly of the body of the 30S subunit. In terms of biological role, with S5 and S12 plays an important role in translational accuracy. In Thermotoga petrophila (strain ATCC BAA-488 / DSM 13995 / JCM 10881 / RKU-1), this protein is Small ribosomal subunit protein uS4.